The chain runs to 183 residues: Bifunctional protein PyrR (183 aa).

Residues 100–112 (VILVDDVLYTGRT) carry the PRPP-binding motif.

Belongs to the purine/pyrimidine phosphoribosyltransferase family. PyrR subfamily.

It catalyses the reaction UMP + diphosphate = 5-phospho-alpha-D-ribose 1-diphosphate + uracil. In terms of biological role, regulates the transcription of the pyrimidine nucleotide (pyr) operon in response to exogenous pyrimidines. Also displays a weak uracil phosphoribosyltransferase activity which is not physiologically significant. The polypeptide is Bifunctional protein PyrR (Deinococcus deserti (strain DSM 17065 / CIP 109153 / LMG 22923 / VCD115)).